An 806-amino-acid polypeptide reads, in one-letter code: Enhancer of polycomb-like protein 1 (806 aa).

2 disordered regions span residues 403-461 and 751-806; these read AITS…QEIG and SLQQ…NAAA. Residues 411–420 are compositionally biased toward basic residues; the sequence is KRAKSSKSSK. Basic and acidic residues predominate over residues 421-439; sequence LHKEDSGLYADEKGSEPKK. Over residues 751–779 the composition is skewed to low complexity; it reads SLQQQQMLQKGQQPINNAPHSQSSSPPSH. Residues 785–795 show a composition bias toward polar residues; it reads NPGSTPNQSSP.

It belongs to the enhancer of polycomb family. As to quaternary structure, component of the NuA4 histone acetyltransferase complex.

The protein localises to the nucleus. Its function is as follows. Component of the NuA4 histone acetyltransferase complex which is involved in transcriptional activation of selected genes principally by acetylation of nucleosomal histone H4 and H2A. The NuA4 complex is also involved in DNA repair. Involved in gene silencing by neighboring heterochromatin, blockage of the silencing spreading along the chromosome, and required for cell cycle progression through G2/M. The chain is Enhancer of polycomb-like protein 1 (EPL1) from Kluyveromyces lactis (strain ATCC 8585 / CBS 2359 / DSM 70799 / NBRC 1267 / NRRL Y-1140 / WM37) (Yeast).